The chain runs to 546 residues: MSSAWKTPRGSDAMPEIMVKIIGSKHFQYLVEKPKIKENDSLKTETQTMHQKPMTDNARQMSRDTPVPINFTDQQTTDNPDDVKEKKHPENNQKSENNQKLLTGANSSRFLDGNIPSQANVHCSSVPTGDQSLSYVHGIPRRKLRDWSLEQMVRGSSDQPEDIGQSPSGTTNEDAFLLALVRRELKSRPLSSNLLEKLQKELKILDPISSGFLLQSQLSRLFLKHEVPLQLPTVKILCQRFSKRGSPEMVNYEKLLWFLNSAASDYPQQNKAAADLRKTESHGTHSQSTPPQHSSSQPEVNRSLLEILKMALRTTNGRLNIDNLNLSFRKEDRSFSGCLPLPKVRAICGKHGLYLTLSLLETLLNHQDLGYQNEIKWQNFVEMLTRASSDLLSDLPTGKNEKKAPAPPMEPEVPEMSQSKTEHMKTPEEELQPESSPAETSACKDPLKPLKIRPVSQPFVNPAVKNKAEECETWIDRFRKLENALYLCDLSNTGVLEKERARRLIHNYNLIYNLSLSPQKIDQALRRFRSGENMLLEPALRYLKEL.

3 disordered regions span residues 37–101, 269–300, and 392–443; these read KEND…NQKL, QNKA…QPEV, and LSDL…TSAC. Composition is skewed to basic and acidic residues over residues 81–93 and 274–283; these read DDVK…ENNQ and ADLRKTESHG. Low complexity predominate over residues 284–298; sequence THSQSTPPQHSSSQP.

This is an uncharacterized protein from Homo sapiens (Human).